Reading from the N-terminus, the 105-residue chain is Dicamba O-demethylase, ferredoxin component (105 aa).

One can recognise a 2Fe-2S ferredoxin-type domain in the interval 2-105 (PQITVVNQSG…GIKVTIAQED (104 aa)). [2Fe-2S] cluster is bound by residues Cys40, Cys46, Cys49, and Cys86.

It belongs to the adrenodoxin/putidaredoxin family. In terms of assembly, monomer. The dicamba O-demethylase multicomponent enzyme system is composed of an oxygenase component (DdmC) and an electron transfer component formed by a ferredoxin reductase (DdmA1) and a ferredoxin (DdmB). In vitro, dicamba O-demethylase assays in which DdmA2 is substituted for DdmA1 demonstrate that the two enzymes possess nearly identical activities. [2Fe-2S] cluster is required as a cofactor.

In terms of biological role, component of the dicamba O-demethylase multicomponent enzyme system involved in the degradation of the herbicide dicamba. In vitro, functions as an intermediate electron transfer protein. The chain is Dicamba O-demethylase, ferredoxin component from Stenotrophomonas maltophilia (Pseudomonas maltophilia).